The primary structure comprises 347 residues: Virulence plasmid protein pGP2-D (347 aa).

In Chlamydia psittaci (Chlamydophila psittaci), this protein is Virulence plasmid protein pGP2-D.